The sequence spans 447 residues: Na(+)-translocating NADH-quinone reductase subunit A (447 aa).

This sequence belongs to the NqrA family. In terms of assembly, composed of six subunits; NqrA, NqrB, NqrC, NqrD, NqrE and NqrF.

The enzyme catalyses a ubiquinone + n Na(+)(in) + NADH + H(+) = a ubiquinol + n Na(+)(out) + NAD(+). NQR complex catalyzes the reduction of ubiquinone-1 to ubiquinol by two successive reactions, coupled with the transport of Na(+) ions from the cytoplasm to the periplasm. NqrA to NqrE are probably involved in the second step, the conversion of ubisemiquinone to ubiquinol. This chain is Na(+)-translocating NADH-quinone reductase subunit A, found in Yersinia pestis.